Reading from the N-terminus, the 345-residue chain is Phosphoribosylformylglycinamidine cyclo-ligase (345 aa).

This sequence belongs to the AIR synthase family.

Its subcellular location is the cytoplasm. It catalyses the reaction 2-formamido-N(1)-(5-O-phospho-beta-D-ribosyl)acetamidine + ATP = 5-amino-1-(5-phospho-beta-D-ribosyl)imidazole + ADP + phosphate + H(+). Its pathway is purine metabolism; IMP biosynthesis via de novo pathway; 5-amino-1-(5-phospho-D-ribosyl)imidazole from N(2)-formyl-N(1)-(5-phospho-D-ribosyl)glycinamide: step 2/2. This is Phosphoribosylformylglycinamidine cyclo-ligase from Methylococcus capsulatus (strain ATCC 33009 / NCIMB 11132 / Bath).